The chain runs to 404 residues: Glucose-1-phosphate adenylyltransferase (404 aa).

Residues Y99, G164, 179–180, and S197 contribute to the alpha-D-glucose 1-phosphate site; that span reads EK.

The protein belongs to the bacterial/plant glucose-1-phosphate adenylyltransferase family. In terms of assembly, homotetramer.

It carries out the reaction alpha-D-glucose 1-phosphate + ATP + H(+) = ADP-alpha-D-glucose + diphosphate. Its pathway is glycan biosynthesis; glycogen biosynthesis. Involved in the biosynthesis of ADP-glucose, a building block required for the elongation reactions to produce glycogen. Catalyzes the reaction between ATP and alpha-D-glucose 1-phosphate (G1P) to produce pyrophosphate and ADP-Glc. The polypeptide is Glucose-1-phosphate adenylyltransferase (Rhodococcus erythropolis (strain PR4 / NBRC 100887)).